The primary structure comprises 68 residues: Conotoxin ba14a (68 aa).

The N-terminal stretch at Met-1–Gly-20 is a signal peptide. Residues Leu-21–Arg-50 constitute a propeptide that is removed on maturation.

Post-translationally, contains 2 disulfide bonds. As to expression, expressed by the venom duct.

The protein localises to the secreted. In Conus bayani (Bayan's cone), this protein is Conotoxin ba14a.